An 864-amino-acid polypeptide reads, in one-letter code: Leukocyte tyrosine kinase receptor (864 aa).

A signal peptide spans 1–16 (MGCWGQLLVWFGAAGA). At 17 to 424 (ILCSSPGSQE…CMDLHKPPGP (408 aa)) the chain is on the extracellular side. Over residues 30–40 (RSSPLPLASPS) the composition is skewed to low complexity. The disordered stretch occupies residues 30 to 64 (RSSPLPLASPSPRDPKVSAPPSILEPASPLNSPGT). Intrachain disulfides connect Cys-73-Cys-86 and Cys-168-Cys-179. The segment at 239-297 (YLRPRDRGRTQASPEKLENRSEAPGSGGRGGAAGGGGGWTSRAPSPQAGRSLQEGAEGG) is disordered. Positions 241 to 259 (RPRDRGRTQASPEKLENRS) are enriched in basic and acidic residues. N-linked (GlcNAc...) asparagine glycosylation is present at Asn-257. Residues 263–277 (GSGGRGGAAGGGGGW) are compositionally biased toward gly residues. A disulfide bridge connects residues Cys-300 and Cys-322. 2 N-linked (GlcNAc...) asparagine glycosylation sites follow: Asn-380 and Asn-412. The helical transmembrane segment at 425–449 (LVLMVAVVATSTLSLLMVCGVLILV) threads the bilayer. Topologically, residues 450–864 (KQKKWQGLQE…QNLWNPTYRS (415 aa)) are cytoplasmic. The 277-residue stretch at 510-786 (VTLLRALGHG…LQYCTQDPDV (277 aa)) folds into the Protein kinase domain. ATP is bound by residues 516-524 (LGHGAFGEV) and Lys-544. Residue Asp-643 is the Proton acceptor of the active site. A Phosphotyrosine; by autocatalysis modification is found at Tyr-676. 2 disordered regions span residues 790–830 (LLPM…KLKS) and 842–864 (SGLK…TYRS). Over residues 852–864 (LQPQNLWNPTYRS) the composition is skewed to polar residues.

The protein belongs to the protein kinase superfamily. Tyr protein kinase family. Insulin receptor subfamily. Homodimer; homodimerizes following ligand-binding. Part of a complex including LTK, TNK2 and GRB2, in which GRB2 promotes LTK recruitment by TNK2. In terms of processing, phosphorylated at tyrosine residues by autocatalysis, which activates kinase activity. Expressed in non-hematopoietic cell lines and T- and B-cell lines.

It localises to the cell membrane. It catalyses the reaction L-tyrosyl-[protein] + ATP = O-phospho-L-tyrosyl-[protein] + ADP + H(+). Activated by ligand-binding, leading to homodimerization and autophosphorylation. In terms of biological role, receptor with a tyrosine-protein kinase activity. Following activation by ALKAL1 or ALKAL2 ligands at the cell surface, transduces an extracellular signal into an intracellular response. Ligand-binding to the extracellular domain induces tyrosine kinase activation, leading to activation of the mitogen-activated protein kinase (MAPK) pathway. Phosphorylates almost exclusively at the first tyrosine of the Y-x-x-x-Y-Y motif. The exact function of this protein is not known; studies with chimeric proteins demonstrate its ability to promote growth and specifically neurite outgrowth, and cell survival. Involved in regulation of the secretory pathway involving endoplasmic reticulum (ER) export sites (ERESs) and ER to Golgi transport. This is Leukocyte tyrosine kinase receptor from Homo sapiens (Human).